We begin with the raw amino-acid sequence, 473 residues long: O-methyltransferase ARMGADRAFT_1088206 (473 aa).

Residues 276–277 (AG), aspartate 299, 330–331 (DM), and arginine 348 contribute to the S-adenosyl-L-methionine site. The active-site Proton acceptor is histidine 352.

Belongs to the class I-like SAM-binding methyltransferase superfamily. Cation-independent O-methyltransferase family.

It participates in secondary metabolite biosynthesis. Functionally, O-methyltransferase, part of the gene cluster that mediates the biosynthesis of melleolides, a range of antifungal and phytotoxic polyketide derivatives composed of an orsellinic acid (OA) moiety esterified to various sesquiterpene alcohols. The first step in melleolides biosynthesis is performed by the delta(6)-protoilludene synthase PRO1 which catalyzes the cyclization of farnesyl diphosphate to protoilludene. The orsellinic acid synthase armB produces OA by condensing acetyl-CoA with 3 malonyl-CoA units in a three-round chain elongation reaction folowed by a C2-C7 ring closure. ArmB further catalyzes the trans-esterification of OA to the various sesquiterpene alcohols resulting from the hydroxylation of protoilludene. The melleolides cluster also includes 5 cytochrome P450 monooxygenases, 4 NAD(+)-dependent oxidoreductases, one flavin-dependent oxidoreductase, and one O-methyltransferase. The cytochrome P450 monooxygenases may be involved in protoilludene hydroxylation to elaborate melleolides with multiple alcohol groups, such as melleolide D, which carries alcohol functionalities at C-4, C-5, C-10, and C-13. The role of the NAD(+)-dependent enzymes remains unknown. Numerous melleolides, including arnamial, show 5'-O-methylation of the aromatic moiety which may be catalyzed by the methyltransferase encoded in the cluster. The flavin-dependent oxidoreductase might represent the dehydrogenase yielding the aldehyde in position 1 of arnamial and other melleolides. Finally, several halogenase localized outside of the cluster, are able to catalyze the transfer of a single chlorine atom to the melleolide backbone, resulting in a 6'-chloromelleolide product. The sequence is that of O-methyltransferase ARMGADRAFT_1088206 from Armillaria gallica (Bulbous honey fungus).